The primary structure comprises 285 residues: MTWPEKTLPTTDASEKRSLGAGVFRRCDGCSHTHDAAELARTFEVCSQCGHHHKLDADGWRRLLLDDGELAAWDEHLVPNDPLRFSDGKSYRDRVAALHKKGRAKEAIEIGRGRLGGRDIAYGAFVFAFMGGSMGSVVGEKITRLFERATREELPVVLLQASGGARMQEGILSLMQMAKSVSALERYRKARLPFLSVLLHPTTGGVAASFAFLGDANIAEPKALIGFAGPRVIENTIRQTLPAGFQRSEFLLDHGMVDAIVPRPEMKAYIGTLLQHLTAGRRARR.

In terms of domain architecture, CoA carboxyltransferase N-terminal spans valine 23 to arginine 285. The Zn(2+) site is built by cysteine 27, cysteine 30, cysteine 46, and cysteine 49. The C4-type zinc-finger motif lies at cysteine 27–cysteine 49.

This sequence belongs to the AccD/PCCB family. As to quaternary structure, acetyl-CoA carboxylase is a heterohexamer composed of biotin carboxyl carrier protein (AccB), biotin carboxylase (AccC) and two subunits each of ACCase subunit alpha (AccA) and ACCase subunit beta (AccD). The cofactor is Zn(2+).

Its subcellular location is the cytoplasm. The catalysed reaction is N(6)-carboxybiotinyl-L-lysyl-[protein] + acetyl-CoA = N(6)-biotinyl-L-lysyl-[protein] + malonyl-CoA. The protein operates within lipid metabolism; malonyl-CoA biosynthesis; malonyl-CoA from acetyl-CoA: step 1/1. Component of the acetyl coenzyme A carboxylase (ACC) complex. Biotin carboxylase (BC) catalyzes the carboxylation of biotin on its carrier protein (BCCP) and then the CO(2) group is transferred by the transcarboxylase to acetyl-CoA to form malonyl-CoA. The sequence is that of Acetyl-coenzyme A carboxylase carboxyl transferase subunit beta from Sorangium cellulosum (strain So ce56) (Polyangium cellulosum (strain So ce56)).